A 183-amino-acid chain; its full sequence is Ribulose bisphosphate carboxylase small subunit, chloroplastic 3 (183 aa).

The transit peptide at 1-43 directs the protein to the chloroplast; it reads MATTMLNRSVIVNKEVAKTPNFPRATKNNKGFASNAAVQKCRD.

It belongs to the RuBisCO small chain family. In terms of assembly, heterohexadecamer of 8 large and 8 small subunits.

The protein resides in the plastid. The protein localises to the chloroplast. RuBisCO catalyzes two reactions: the carboxylation of D-ribulose 1,5-bisphosphate, the primary event in carbon dioxide fixation, as well as the oxidative fragmentation of the pentose substrate. Both reactions occur simultaneously and in competition at the same active site. Although the small subunit is not catalytic it is essential for maximal activity. The protein is Ribulose bisphosphate carboxylase small subunit, chloroplastic 3 of Acetabularia peniculus (Green alga).